Consider the following 452-residue polypeptide: Probable ECA polymerase (452 aa).

11 helical membrane passes run 6–26 (FSGL…LTWF), 37–57 (VFFS…TSVL), 63–83 (VGVA…CFYG), 118–138 (VILM…NGFL), 155–175 (GVAL…VYFL), 181–201 (AWLF…MIVG), 207–227 (IIIA…ISLW), 228–248 (MLAA…LKRY), 341–361 (LVVM…GMII), 378–398 (YKAA…IVLA), and 410–430 (VFFL…FWLF).

Belongs to the WzyE family. Probably part of a complex composed of WzxE, WzyE and WzzE.

It localises to the cell inner membrane. Its pathway is bacterial outer membrane biogenesis; enterobacterial common antigen biosynthesis. Its function is as follows. Probably involved in the polymerization of enterobacterial common antigen (ECA) trisaccharide repeat units. In Salmonella newport (strain SL254), this protein is Probable ECA polymerase.